The primary structure comprises 1183 residues: ATP-dependent helicase/nuclease subunit A (1183 aa).

One can recognise a UvrD-like helicase ATP-binding domain in the interval 3–461 (VQWTDEQQRA…IDLTKNFRSR (459 aa)). 24 to 31 (AAAGSGKT) lines the ATP pocket. The region spanning 473–769 (RQVMDEAVGE…RIMTIHQSKG (297 aa)) is the UvrD-like helicase C-terminal domain.

This sequence belongs to the helicase family. AddA subfamily. In terms of assembly, heterodimer of AddA and AddB/RexB. It depends on Mg(2+) as a cofactor.

It catalyses the reaction Couples ATP hydrolysis with the unwinding of duplex DNA by translocating in the 3'-5' direction.. The catalysed reaction is ATP + H2O = ADP + phosphate + H(+). Its function is as follows. The heterodimer acts as both an ATP-dependent DNA helicase and an ATP-dependent, dual-direction single-stranded exonuclease. Recognizes the chi site generating a DNA molecule suitable for the initiation of homologous recombination. The AddA nuclease domain is required for chi fragment generation; this subunit has the helicase and 3' -&gt; 5' nuclease activities. This chain is ATP-dependent helicase/nuclease subunit A, found in Exiguobacterium sibiricum (strain DSM 17290 / CCUG 55495 / CIP 109462 / JCM 13490 / 255-15).